The chain runs to 367 residues: UDP-N-acetylglucosamine--N-acetylmuramyl-(pentapeptide) pyrophosphoryl-undecaprenol N-acetylglucosamine transferase (367 aa).

Residues 15-17 (TGG), asparagine 127, arginine 163, serine 191, isoleucine 249, and glutamine 294 contribute to the UDP-N-acetyl-alpha-D-glucosamine site.

The protein belongs to the glycosyltransferase 28 family. MurG subfamily.

The protein resides in the cell inner membrane. The enzyme catalyses di-trans,octa-cis-undecaprenyl diphospho-N-acetyl-alpha-D-muramoyl-L-alanyl-D-glutamyl-meso-2,6-diaminopimeloyl-D-alanyl-D-alanine + UDP-N-acetyl-alpha-D-glucosamine = di-trans,octa-cis-undecaprenyl diphospho-[N-acetyl-alpha-D-glucosaminyl-(1-&gt;4)]-N-acetyl-alpha-D-muramoyl-L-alanyl-D-glutamyl-meso-2,6-diaminopimeloyl-D-alanyl-D-alanine + UDP + H(+). It functions in the pathway cell wall biogenesis; peptidoglycan biosynthesis. Cell wall formation. Catalyzes the transfer of a GlcNAc subunit on undecaprenyl-pyrophosphoryl-MurNAc-pentapeptide (lipid intermediate I) to form undecaprenyl-pyrophosphoryl-MurNAc-(pentapeptide)GlcNAc (lipid intermediate II). This is UDP-N-acetylglucosamine--N-acetylmuramyl-(pentapeptide) pyrophosphoryl-undecaprenol N-acetylglucosamine transferase from Burkholderia mallei (strain NCTC 10247).